Here is a 755-residue protein sequence, read N- to C-terminus: Elongation factor G, mitochondrial (755 aa).

The transit peptide at 1–38 (MFKRVGLIAGIAGPVAGSSRFSAVSFSKRAFSASSKRC) directs the protein to the mitochondrion. Residues 63-344 (KKLRNIGISA…AIVEYLPNPS (282 aa)) enclose the tr-type G domain. GTP-binding positions include 72-79 (AHIDSGKT), 143-147 (DTPGH), and 197-200 (NKMD).

It belongs to the TRAFAC class translation factor GTPase superfamily. Classic translation factor GTPase family. EF-G/EF-2 subfamily.

It is found in the mitochondrion. It functions in the pathway protein biosynthesis; polypeptide chain elongation. In terms of biological role, mitochondrial GTPase that catalyzes the GTP-dependent ribosomal translocation step during translation elongation. During this step, the ribosome changes from the pre-translocational (PRE) to the post-translocational (POST) state as the newly formed A-site-bound peptidyl-tRNA and P-site-bound deacylated tRNA move to the P and E sites, respectively. Catalyzes the coordinated movement of the two tRNA molecules, the mRNA and conformational changes in the ribosome. This chain is Elongation factor G, mitochondrial, found in Kluyveromyces lactis (strain ATCC 8585 / CBS 2359 / DSM 70799 / NBRC 1267 / NRRL Y-1140 / WM37) (Yeast).